The following is a 284-amino-acid chain: Pantothenate synthetase (284 aa).

30-37 (MGNLHEGH) is a binding site for ATP. His-37 acts as the Proton donor in catalysis. Position 61 (Gln-61) interacts with (R)-pantoate. Gln-61 contributes to the beta-alanine binding site. Residue 149–152 (GEKD) coordinates ATP. Gln-155 is a (R)-pantoate binding site. Residues Val-178 and 186-189 (LSSR) contribute to the ATP site.

Belongs to the pantothenate synthetase family. As to quaternary structure, homodimer.

It is found in the cytoplasm. The catalysed reaction is (R)-pantoate + beta-alanine + ATP = (R)-pantothenate + AMP + diphosphate + H(+). It functions in the pathway cofactor biosynthesis; (R)-pantothenate biosynthesis; (R)-pantothenate from (R)-pantoate and beta-alanine: step 1/1. Catalyzes the condensation of pantoate with beta-alanine in an ATP-dependent reaction via a pantoyl-adenylate intermediate. In Yersinia pestis bv. Antiqua (strain Antiqua), this protein is Pantothenate synthetase.